An 825-amino-acid chain; its full sequence is MSRIRWRYGTAATALLVAAGLVPTATAHAEDVTDYSITVDPAAKGAAIDDTMYGVFFEDINRAADGGLYAELVQNRSFEYSTDDNRSYTPLTSWIVDGTGEVVNDAGRLNERNRNYLSLGAGSSVTNAGYNTGIRVEQGKRYDFSVWARAGSASTLTVALKDAAGTLATARQVAVEGGWAKYRATFTATRTSNRGRLAVAANDAAALDMVSLFPRDTYRNQQNGLRKDLAEKIAALHPGFVRFPGGCLVNTGSMEDYSAASGWQRKRSYQWKDTVGPVEERATNANFWGYNQSYGLGYYEYFRFSEDIGAMPLPVVPALVTGCGQNKAVDDEALLKRHIQDTLDLIEFANGPATSKWGKVRAEMGHPRPFRLTHLEVGNEENLPDEFFDRFKQFRAAIEAEYPDITVVSNSGPDDAGTTFDTAWKLNREANVEMVDEHYYNSPNWFLQNNDRYDSYDRGGPKVFLGEYASQGNAWKNGLSEAAFMTGLERNADVVKLASYAPLLANEDYVQWRPDLVWFNNRASWNSANYEVQKLFMNNVGDRVVPSKATTTPDVSGPITGAVGLSTWATGTAYDDVKVTAADGATLLSDDFSGDASKWTHTGAGSWSVQDGQYVQTDAAAENTMVQAGDPSWHDYDLHVKATKKSGKEGFLVAFGVKDTGNYYWWNLGGWNNTQSAVEQAVDGGKGTLLTKAGSIETGRAYDIDVKVRGRQVTLYLDGQEWGGFTDDKPAEPFRQVVTKDARTGDLIVKVVNAQPAEARTAIDLGGARVASTARVTTLAADQDAVNTETDAPVTPATSTFSGVTDRFTYTFPANSVTFLRLKQR.

A signal peptide spans 1-29 (MSRIRWRYGTAATALLVAAGLVPTATAHA). Glu58 contributes to the alpha-L-arabinofuranose binding site. The 146-residue stretch at 70 to 215 (AELVQNRSFE…ALDMVSLFPR (146 aa)) folds into the CBM-cenC domain. Residues Cys247 and 379–380 (NE) each bind alpha-L-arabinofuranose. Residue Glu380 is the Proton donor/acceptor of the active site.

It belongs to the glycosyl hydrolase 51 family.

Its subcellular location is the secreted. The enzyme catalyses Hydrolysis of terminal non-reducing alpha-L-arabinofuranoside residues in alpha-L-arabinosides.. Involved in the degradation of arabinan and is a key enzyme in the complete degradation of the plant cell wall. Catalyzes the cleavage of terminal alpha-L-arabinofuranosyl residues of arabinan present in the arabinofuranosyl polysaccharides or oligosaccharides. It cannot act on other arabinose-containing polysaccharides and arabinoxylo-oligosaccharides. It leaves most of the polymer intact, including most of the main-chain residues and the arabinose side chains. It acts preferentially on the linear alpha-(1-&gt;2)-linked arabinofuranobiosides and alpha-(1-&gt;3)-linked arabinofuranobiosides, and is much less effective on alpha-(1-&gt;5)-linked arabinofuranobiosides. It also hydrolyzes the terminal alpha-(1-&gt;3)-linked arabinofuranotriosides in preference to the alpha-(1-&gt;5)-linked arabinofuranotriosides. The protein is Extracellular exo-alpha-L-arabinofuranosidase of Streptomyces chartreusis.